We begin with the raw amino-acid sequence, 107 residues long: Metallothionein-1 (107 aa).

The propeptide occupies 1 to 2 (MD).

This sequence belongs to the metallothionein superfamily. Type 7 family.

The metallothioneins are involved in the cellular sequestration of toxic metal ions. Binds 12 cadmium ions per molecule. The chain is Metallothionein-1 from Tetrahymena pyriformis.